The chain runs to 169 residues: Phosphopantetheine adenylyltransferase (169 aa).

Residue Ser-10 participates in substrate binding. Residues 10 to 11 (SF) and His-18 each bind ATP. The substrate site is built by Lys-42, Leu-74, and Arg-88. ATP contacts are provided by residues 89-91 (GLR), Glu-99, and 124-130 (YAFLSSS).

The protein belongs to the bacterial CoaD family. In terms of assembly, homohexamer. Requires Mg(2+) as cofactor.

The protein localises to the cytoplasm. It catalyses the reaction (R)-4'-phosphopantetheine + ATP + H(+) = 3'-dephospho-CoA + diphosphate. It participates in cofactor biosynthesis; coenzyme A biosynthesis; CoA from (R)-pantothenate: step 4/5. Functionally, reversibly transfers an adenylyl group from ATP to 4'-phosphopantetheine, yielding dephospho-CoA (dPCoA) and pyrophosphate. This Geobacillus sp. (strain WCH70) protein is Phosphopantetheine adenylyltransferase.